The primary structure comprises 547 residues: Delta-guaiene synthase 1 (547 aa).

3 residues coordinate Mg(2+): Asp-299, Asp-303, and Asp-444. The short motif at 299–303 is the DDXXD motif element; it reads DDTYD.

This sequence belongs to the terpene synthase family. The cofactor is Mg(2+).

The catalysed reaction is (2E,6E)-farnesyl diphosphate = delta-guaiene + diphosphate. It catalyses the reaction (2E,6E)-farnesyl diphosphate = alpha-guaiene + diphosphate. The protein operates within secondary metabolite biosynthesis; terpenoid biosynthesis. Its function is as follows. Sesquiterpene synthase involved in the biosynthesis of delta-guaiene (81.2%) and alpha-guaiene (18.1%), two structures composed of five- and seven-membered rings. Also produces 0.7% of alpha-humulene. This is Delta-guaiene synthase 1 (C2) from Aquilaria crassna (Eagle wood).